An 87-amino-acid polypeptide reads, in one-letter code: Asparagine--tRNA ligase, cytoplasmic (87 aa).

It belongs to the class-II aminoacyl-tRNA synthetase family.

It localises to the cytoplasm. It catalyses the reaction tRNA(Asn) + L-asparagine + ATP = L-asparaginyl-tRNA(Asn) + AMP + diphosphate + H(+). The protein is Asparagine--tRNA ligase, cytoplasmic (DED81) of Saccharomyces paradoxus (Yeast).